An 827-amino-acid polypeptide reads, in one-letter code: Spastin (827 aa).

Polar residues predominate over residues methionine 1–lysine 13. The interval methionine 1–alanine 58 is disordered. Topologically, residues methionine 1 to proline 79 are cytoplasmic. Over residues threonine 38–serine 50 the composition is skewed to low complexity. The segment at residues valine 80–tyrosine 100 is an intramembrane region (helical). At valine 101–leucine 827 the chain is on the cytoplasmic side. Disordered regions lie at residues glutamine 127–leucine 190 and serine 207–histidine 229. Basic residues predominate over residues glycine 129 to histidine 141. The span at serine 142–leucine 190 shows a compositional bias: low complexity. In terms of domain architecture, MIT spans histidine 231 to leucine 306. Disordered stretches follow at residues histidine 358–serine 381, valine 398–glycine 433, and valine 476–serine 526. Residues threonine 364–serine 381 show a composition bias toward low complexity. Low complexity-rich tracts occupy residues valine 476–valine 486 and glutamine 510–glutamine 524. Glycine 592 to threonine 599 serves as a coordination point for ATP.

This sequence belongs to the AAA ATPase family. Spastin subfamily. Homohexamer. The homohexamer is stabilized by ATP-binding. The homohexamer may adopt a ring conformation through which microtubules pass prior to being severed. Interacts with microtubules.

It is found in the membrane. The protein localises to the cytoplasm. Its subcellular location is the cytoskeleton. The protein resides in the microtubule organizing center. It localises to the centrosome. It catalyses the reaction n ATP + n H2O + a microtubule = n ADP + n phosphate + (n+1) alpha/beta tubulin heterodimers.. Its function is as follows. ATP-dependent microtubule severing protein. Microtubule severing may promote reorganization of cellular microtubule arrays and the release of microtubules from the microtubule organizing center following nucleation. In Anopheles gambiae (African malaria mosquito), this protein is Spastin (spas).